Consider the following 200-residue polypeptide: Endoribonuclease YbeY (200 aa).

The segment covering 1–18 has biased composition (pro residues); the sequence is MPADPALPDPVPPGPTAP. Positions 1-22 are disordered; that stretch reads MPADPALPDPVPPGPTAPVPTD. Positions 151, 155, and 161 each coordinate Zn(2+).

The protein belongs to the endoribonuclease YbeY family. Zn(2+) is required as a cofactor.

Its subcellular location is the cytoplasm. Functionally, single strand-specific metallo-endoribonuclease involved in late-stage 70S ribosome quality control and in maturation of the 3' terminus of the 16S rRNA. The chain is Endoribonuclease YbeY from Rhodospirillum rubrum (strain ATCC 11170 / ATH 1.1.1 / DSM 467 / LMG 4362 / NCIMB 8255 / S1).